The sequence spans 558 residues: SPATS2-like protein (558 aa).

An N-acetylalanine modification is found at Ala2. Residues 63–79 (GKKKNNKRKRSKSKQHQ) show a composition bias toward basic residues. 2 disordered regions span residues 63–148 (GKKK…RGIT) and 161–202 (DGNP…SNAP). Composition is skewed to basic and acidic residues over residues 80–92 (GNKDAKDKGERPE) and 110–142 (GCEKDSSSPDSAREKLALTPREKKISILEEPPR). Residue Ser120 is modified to Phosphoserine. Residues 279–344 (KEEAMDILTA…ARFSCDIEQL (66 aa)) adopt a coiled-coil conformation. Residues 383 to 514 (KQGNFSRKSS…SEKARRRQHA (132 aa)) form a disordered region. Residues 416-433 (DACQQTMPTNKQQNGPSN) are compositionally biased toward polar residues. At Ser455 the chain carries Phosphoserine. Positions 469-485 (HEHRRQPHNGFRPKNKG) are enriched in basic residues.

The protein belongs to the SPATS2 family.

The protein resides in the cytoplasm. The protein localises to the nucleus. It localises to the nucleolus. The sequence is that of SPATS2-like protein (Spats2l) from Rattus norvegicus (Rat).